Consider the following 37-residue polypeptide: Large ribosomal subunit protein bL36c (37 aa).

It belongs to the bacterial ribosomal protein bL36 family.

The protein localises to the plastid. It localises to the chloroplast. This Phaeodactylum tricornutum (strain CCAP 1055/1) protein is Large ribosomal subunit protein bL36c.